A 1029-amino-acid chain; its full sequence is Cilia- and flagella-associated protein 91 (1029 aa).

Disordered regions lie at residues 72 to 97 and 117 to 170; these read NYRP…GPNR and PPSQ…PWEP. Residues 272–299 adopt a coiled-coil conformation; the sequence is LELLDNALQVREEELDDENRLRVEARKE. The segment covering 837 to 854 has biased composition (low complexity); the sequence is ENQDQQEPQPQPQPSSSS. 2 disordered regions span residues 837-861 and 876-1029; these read ENQD…DLAD and GEPS…EAAE. Residues 890-910 are compositionally biased toward acidic residues; it reads QQLEADAEAEAEAEAEAEAGA. The span at 911–921 shows a compositional bias: low complexity; the sequence is EAEASAQAGAE. Acidic residues predominate over residues 922–932; that stretch reads AEAEAGVEAEA. Low complexity predominate over residues 933–944; sequence EASAGAEASVGA. Acidic residues predominate over residues 964–982; that stretch reads PEAEAEAEAGAEAEAENGA. The segment covering 984–999 has biased composition (basic and acidic residues); the sequence is AEARLGGEEEGFREGE. Gly residues predominate over residues 1000–1015; it reads GQGGAAAGEAGPGGEL. Acidic residues predominate over residues 1016-1029; the sequence is AEGEGEAGEGEAAE.

It belongs to the CFAP91 family. As to quaternary structure, identified in a spoke-associated complex containing CFAP61, CFAP91 and CFAP251; the complex is associated with the radial spokes of the axoneme. The complex associates with Calmodulin; the association is calcium sensitive. Interacts with RSP3.

It is found in the cytoplasm. The protein resides in the cytoskeleton. The protein localises to the flagellum axoneme. As component of a spoke-associated complex, regulates flagellar dynein activity by mediating regulatory signals between the radial spokes and dynein arms. This is Cilia- and flagella-associated protein 91 from Chlamydomonas reinhardtii (Chlamydomonas smithii).